The chain runs to 179 residues: ADP-ribosylation factor (179 aa).

Gly2 carries the N-myristoyl glycine lipid modification. GTP-binding positions include 24 to 31 (GLDAAGKT), 67 to 71 (DVGGQ), and 126 to 129 (NKQD).

The protein belongs to the small GTPase superfamily. Arf family.

It is found in the golgi apparatus. Its function is as follows. GTP-binding protein involved in protein trafficking; may modulate vesicle budding and uncoating within the Golgi apparatus. This is ADP-ribosylation factor (ARF1) from Candida albicans (strain SC5314 / ATCC MYA-2876) (Yeast).